The sequence spans 258 residues: Imidazole glycerol phosphate synthase subunit HisF (258 aa).

Catalysis depends on residues Asp11 and Asp130.

It belongs to the HisA/HisF family. In terms of assembly, heterodimer of HisH and HisF.

The protein resides in the cytoplasm. The catalysed reaction is 5-[(5-phospho-1-deoxy-D-ribulos-1-ylimino)methylamino]-1-(5-phospho-beta-D-ribosyl)imidazole-4-carboxamide + L-glutamine = D-erythro-1-(imidazol-4-yl)glycerol 3-phosphate + 5-amino-1-(5-phospho-beta-D-ribosyl)imidazole-4-carboxamide + L-glutamate + H(+). The protein operates within amino-acid biosynthesis; L-histidine biosynthesis; L-histidine from 5-phospho-alpha-D-ribose 1-diphosphate: step 5/9. Its function is as follows. IGPS catalyzes the conversion of PRFAR and glutamine to IGP, AICAR and glutamate. The HisF subunit catalyzes the cyclization activity that produces IGP and AICAR from PRFAR using the ammonia provided by the HisH subunit. The protein is Imidazole glycerol phosphate synthase subunit HisF of Methylobacterium nodulans (strain LMG 21967 / CNCM I-2342 / ORS 2060).